The primary structure comprises 302 residues: Protoheme IX farnesyltransferase 1 (302 aa).

8 helical membrane passes run 27-47 (VVAL…VTDF), 49-69 (WIQA…AAAF), 98-118 (SVAI…YAWV), 121-141 (LTAW…TMYL), 149-169 (IVIA…AVTG), 175-195 (AWLL…ALAI), 228-248 (LLTL…IYLF), and 281-301 (IYHL…GMVL).

This sequence belongs to the UbiA prenyltransferase family. Protoheme IX farnesyltransferase subfamily.

The protein resides in the cell inner membrane. It catalyses the reaction heme b + (2E,6E)-farnesyl diphosphate + H2O = Fe(II)-heme o + diphosphate. It participates in porphyrin-containing compound metabolism; heme O biosynthesis; heme O from protoheme: step 1/1. Converts heme B (protoheme IX) to heme O by substitution of the vinyl group on carbon 2 of heme B porphyrin ring with a hydroxyethyl farnesyl side group. This is Protoheme IX farnesyltransferase 1 from Vibrio parahaemolyticus serotype O3:K6 (strain RIMD 2210633).